Here is a 419-residue protein sequence, read N- to C-terminus: Dimethylallyltryptophan synthase 1 (419 aa).

L-tryptophan contacts are provided by Phe81, Met82, and Glu90. Phe81 provides a ligand contact to L-tyrosine. Residues Arg105, Lys187, Tyr189, Arg251, Lys253, and Tyr255 each coordinate (2E)-geranyl diphosphate. The dimethylallyl diphosphate site is built by Arg105, Lys187, Tyr189, Arg251, Lys253, and Tyr255. L-tryptophan is bound at residue Arg257. Arg257 lines the L-tyrosine pocket. Residues Lys332 and Tyr334 each coordinate (2E)-geranyl diphosphate. Positions 332 and 334 each coordinate dimethylallyl diphosphate. Position 389 (Tyr389) interacts with L-tryptophan. Tyr389 contacts L-tyrosine. Tyr404 serves as a coordination point for (2E)-geranyl diphosphate.

The protein belongs to the tryptophan dimethylallyltransferase family.

It carries out the reaction L-tyrosine + dimethylallyl diphosphate = 4-O-dimethylallyl-L-tyrosine + diphosphate. In terms of biological role, dimethylallyltryptophan synthase; part of the DMATS1 gene cluster that mediates the biosynthesis of a reversely N-prenylated monomeric L-tryptophan (r-N-DMAT). DMATS1 catalyzes the reverse N-prenylation of L-Trp with DMAPP to yield N-dimethylallyl-L-tryptophan. DMATS1 exhibits unusually broad substrate specificity and can utilize geranyl diphosphate (GPP) or L-Tyr as an alternative prenyl donor or acceptor, respectively. Is able to catalyze both forward and reverse prenylation, i.e., at C1 or C3 of DMAPP; and it can catalyze C-N and C-O bond-forming reactions. The main product of the cluster is the reverse-N-dimethylallyl-L-tryptophan (r-N-DMAT) produced by the dimethylallyltryptophan synthase DMATS1 and it remains unclear whether this metabolite undergoes further modifications when silent gene clusters are activated. The acetylated form of r-N-DMAT, ac-r-N-DMAT, is also produced. The roles of the cytochrome P450 monooxygenase FFUJ_09176 and the methyltransferase FFUJ_09178 have still to be elucidated. The chain is Dimethylallyltryptophan synthase 1 from Gibberella fujikuroi (strain CBS 195.34 / IMI 58289 / NRRL A-6831) (Bakanae and foot rot disease fungus).